The primary structure comprises 943 residues: Isoleucine--tRNA ligase (943 aa).

Residues 59 to 69 carry the 'HIGH' region motif; the sequence is PYANGQIHLGH. E577 is a binding site for L-isoleucyl-5'-AMP. Positions 618 to 622 match the 'KMSKS' region motif; that stretch reads KMSKS. K621 provides a ligand contact to ATP. The Zn(2+) site is built by C906, C909, C926, and C929.

The protein belongs to the class-I aminoacyl-tRNA synthetase family. IleS type 1 subfamily. As to quaternary structure, monomer. Requires Zn(2+) as cofactor.

The protein resides in the cytoplasm. The enzyme catalyses tRNA(Ile) + L-isoleucine + ATP = L-isoleucyl-tRNA(Ile) + AMP + diphosphate. Catalyzes the attachment of isoleucine to tRNA(Ile). As IleRS can inadvertently accommodate and process structurally similar amino acids such as valine, to avoid such errors it has two additional distinct tRNA(Ile)-dependent editing activities. One activity is designated as 'pretransfer' editing and involves the hydrolysis of activated Val-AMP. The other activity is designated 'posttransfer' editing and involves deacylation of mischarged Val-tRNA(Ile). This is Isoleucine--tRNA ligase from Xanthomonas campestris pv. campestris (strain B100).